Here is a 204-residue protein sequence, read N- to C-terminus: Urease accessory protein UreG (204 aa).

12 to 19 (GPVGSGKT) is a GTP binding site.

This sequence belongs to the SIMIBI class G3E GTPase family. UreG subfamily. As to quaternary structure, homodimer. UreD, UreF and UreG form a complex that acts as a GTP-hydrolysis-dependent molecular chaperone, activating the urease apoprotein by helping to assemble the nickel containing metallocenter of UreC. The UreE protein probably delivers the nickel.

It is found in the cytoplasm. Its function is as follows. Facilitates the functional incorporation of the urease nickel metallocenter. This process requires GTP hydrolysis, probably effectuated by UreG. The chain is Urease accessory protein UreG from Pseudomonas aeruginosa (strain LESB58).